Reading from the N-terminus, the 179-residue chain is Large ribosomal subunit protein bL25 (179 aa).

Belongs to the bacterial ribosomal protein bL25 family. CTC subfamily. In terms of assembly, part of the 50S ribosomal subunit; part of the 5S rRNA/L5/L18/L25 subcomplex. Contacts the 5S rRNA. Binds to the 5S rRNA independently of L5 and L18.

Its function is as follows. This is one of the proteins that binds to the 5S RNA in the ribosome where it forms part of the central protuberance. This Desulfitobacterium hafniense (strain DSM 10664 / DCB-2) protein is Large ribosomal subunit protein bL25.